Here is a 2203-residue protein sequence, read N- to C-terminus: Voltage-dependent L-type calcium channel subunit alpha-1D (2203 aa).

Disordered regions lie at residues 1 to 51 (MMMM…QTVL) and 64 to 100 (KAAQ…SSNS). The Cytoplasmic segment spans residues 1 to 126 (MMMMMMMKKM…RACISIVDWK (126 aa)). Positions 38–51 (GPTSQPNSSKQTVL) are enriched in polar residues. Positions 82–93 (QRKRQQYAKSKK) are enriched in basic residues. The stretch at 112–408 (NNPIRRACIS…NLVLGVLSGE (297 aa)) is one I repeat. The helical transmembrane segment at 127 to 145 (PFDIFILLAIFANCVALAI) threads the bilayer. Over 146–163 (YIPFPEDDSNSTNHNLEK) the chain is Extracellular. Asparagine 155 carries N-linked (GlcNAc...) asparagine glycosylation. The helical transmembrane segment at 164 to 183 (VEYAFLIIFTVETFLKIIAS) threads the bilayer. Residues 184-195 (GLLLHPNASVRN) are Cytoplasmic-facing. Residues 196–214 (GWNLLDFVIVIVGLFSVIL) traverse the membrane as a helical segment. Over 215–235 (EQLTKETEGGNHSSGKSGGFD) the chain is Extracellular. Asparagine 225 carries N-linked (GlcNAc...) asparagine glycosylation. A helical transmembrane segment spans residues 236-254 (VKALRAFRVLRPLRLVSGV). At 255–273 (PSLQVVLNSIIKAMVPLLH) the chain is on the cytoplasmic side. Residues 274–293 (IALLVLFVIIIYAIIGLELF) traverse the membrane as a helical segment. Topologically, residues 294–381 (IGKMHKTCFF…WVNDAIGWEW (88 aa)) are extracellular. N-linked (GlcNAc...) asparagine glycosylation is present at asparagine 329. A Ca(2+)-binding site is contributed by glutamate 364. A helical membrane pass occupies residues 382-406 (PWVYFVSLIILGSFFVLNLVLGVLS). Residues 407–582 (GEFSKEREKA…RRCRAAVKSV (176 aa)) are Cytoplasmic-facing. The interval 429 to 446 (QQLEEDLKGYLDWITQAE) is binding to the beta subunit. Residues 449 to 480 (DPENEEEGGEEGKRNTSMPTSETESVNTENVS) are disordered. Over residues 463–479 (NTSMPTSETESVNTENV) the composition is skewed to polar residues. Residues 528-774 (EALCVCRCSL…DWNAVMYDGI (247 aa)) form an II repeat. Residues 583 to 602 (TFYWLVIVLVFLNTLTISSE) form a helical membrane-spanning segment. At 603-617 (HYNQPDWLTQIQDIA) the chain is on the extracellular side. The chain crosses the membrane as a helical span at residues 618-636 (NKVLLALFTCEMLVKMYSL). Residues 637 to 644 (GLQAYFVS) lie on the Cytoplasmic side of the membrane. A helical membrane pass occupies residues 645–663 (LFNRFDCFVVCGGITETIL). The Extracellular segment spans residues 664–673 (VELELMSPLG). Residues 674-692 (VSVFRCVRLLRIFKVTRHW) traverse the membrane as a helical segment. The Cytoplasmic portion of the chain corresponds to 693–711 (TSLSNLVASLLNSMKSIAS). The chain crosses the membrane as a helical span at residues 712–732 (LLLLLFLFIIIFSLLGMQLFG). Residues 733–786 (GKFNFDETQTKRSTFDNFPQALLTVFQILTGEDWNAVMYDGIMAYGGPSSSGMI) lie on the Extracellular side of the membrane. Glutamate 764 contributes to the Ca(2+) binding site. Residues 787 to 811 (VCIYFIILFICGNYILLKLFLAIAV) form a helical membrane-spanning segment. Over 812 to 945 (DNLADAESLN…VGCHKLINHH (134 aa)) the chain is Cytoplasmic. A disordered region spans residues 822-909 (TAQKEEAEEK…AGPRPRRISE (88 aa)). The segment covering 824-849 (QKEEAEEKERKKIARKESLENKKNNK) has biased composition (basic and acidic residues). Residues 850–861 (PEVNQIANSDNK) show a composition bias toward polar residues. Positions 884–897 (VGEEEEEEEEDEPE) are enriched in acidic residues. Residues 892-1174 (EEDEPEVPAG…LLYKAIDSNG (283 aa)) form an III repeat. The chain crosses the membrane as a helical span at residues 946–964 (IFTNLILVFIMLSSAALAA). Topologically, residues 965-980 (EDPIRSHSFRNTILGY) are extracellular. The chain crosses the membrane as a helical span at residues 981–1000 (FDYAFTAIFTVEILLKMTTF). The Cytoplasmic portion of the chain corresponds to 1001–1012 (GAFLHKGAFCRN). Residues 1013–1031 (YFNLLDMLVVGVSLVSFGI) form a helical membrane-spanning segment. The Extracellular segment spans residues 1032-1037 (QSSAIS). Residues 1038–1057 (VVKILRVLRVLRPLRAINRA) form a helical membrane-spanning segment. Residues 1058–1076 (KGLKHVVQCVFVAIRTIGN) lie on the Cytoplasmic side of the membrane. Residues 1077 to 1096 (IMIVTTLLQFMFACIGVQLF) form a helical membrane-spanning segment. The Extracellular portion of the chain corresponds to 1097–1186 (KGKFYRCTDE…VGPVYNYRVE (90 aa)). The interval 1134–1224 (RIWQNSDFNF…QEQGEKEYKN (91 aa)) is dihydropyridine binding. Glutamate 1160 contacts Ca(2+). A helical membrane pass occupies residues 1187 to 1207 (ISIFFIIYIIIVAFFMMNIFV). At 1208 to 1264 (GFVIVTFQEQGEKEYKNCELDKNQRQCVEYALKARPLRRYIPKNPYQYKFWYVVNSS) the chain is on the cytoplasmic side. One copy of the IV repeat lies at 1211–1486 (IVTFQEQGEK…YTCGSNFAIV (276 aa)). Residues 1265–1283 (PFEYMMFVLIMLNTLCLAM) traverse the membrane as a helical segment. At 1284–1298 (QHYEQSKMFNDAMDI) the chain is on the extracellular side. A helical membrane pass occupies residues 1299-1318 (LNMVFTGVFTVEMVLKVIAF). Residues 1319-1325 (KPKGYFS) lie on the Cytoplasmic side of the membrane. The chain crosses the membrane as a helical span at residues 1326–1347 (DAWNTFDSLIVIGSIIDVALSE). The Extracellular portion of the chain corresponds to 1348–1357 (ADNSEESNRI). Residues 1358 to 1377 (SITFFRLFRVMRLVKLLSRG) traverse the membrane as a helical segment. The Cytoplasmic portion of the chain corresponds to 1378–1396 (EGIRTLLWTFIKSFQALPY). A helical membrane pass occupies residues 1397 to 1416 (VALLIAMLFFIYAVIGMQMF). Residues 1417 to 1483 (GKVAMRDNNQ…GEEYTCGSNF (67 aa)) lie on the Extracellular side of the membrane. Positions 1464–1530 (LCDPDSDYNP…LGPHHLDEFK (67 aa)) are dihydropyridine binding. Residues 1476 to 1519 (EYTCGSNFAIVYFISFYMLCAFLIINLFVAVIMDNFDYLTRDWS) are phenylalkylamine binding. The chain crosses the membrane as a helical span at residues 1484-1508 (AIVYFISFYMLCAFLIINLFVAVIM). Topologically, residues 1509-2203 (DNFDYLTRDW…ADEMICITTL (695 aa)) are cytoplasmic. 4 disordered regions span residues 1734 to 1766 (NHVN…PASD), 1795 to 1816 (TSTN…KRPS), 1920 to 1963 (FERP…HRRS), and 2176 to 2195 (GPGY…DLAD). The span at 1795-1806 (TSTNANLNNANM) shows a compositional bias: polar residues. Positions 2180 to 2195 (SDEEPDPGREEEDLAD) are enriched in acidic residues.

The protein belongs to the calcium channel alpha-1 subunit (TC 1.A.1.11) family. CACNA1D subfamily. As to quaternary structure, voltage-dependent calcium channels are multisubunit complexes, consisting of alpha-1, alpha-2, beta and delta subunits in a 1:1:1:1 ratio. The channel activity is directed by the pore-forming and voltage-sensitive alpha-1 subunit. In many cases, this subunit is sufficient to generate voltage-sensitive calcium channel activity. The auxiliary subunits beta and alpha-2/delta linked by a disulfide bridge regulate the channel activity. Interacts with CABP1 and CABP4, resulting in a near elimination of calcium-dependent inactivation of the channel. Interacts with RIMBP2. As to expression, expressed in brain, pancreatic islets and B-lymphocytes.

The protein localises to the membrane. It carries out the reaction Ca(2+)(in) = Ca(2+)(out). Voltage-sensitive calcium channels (VSCC) mediate the entry of calcium ions into excitable cells and are also involved in a variety of calcium-dependent processes, including muscle contraction, hormone or neurotransmitter release, gene expression, cell motility, cell division and cell death. The isoform alpha-1D gives rise to L-type calcium currents. Long-lasting (L-type) calcium channels belong to the 'high-voltage activated' (HVA) group. They are blocked by dihydropyridines (DHP), phenylalkylamines, and by benzothiazepines. Functionally, voltage-sensitive calcium channels (VSCC) mediate the entry of calcium ions into excitable cells and are also involved in a variety of calcium-dependent processes, including muscle contraction, hormone or neurotransmitter release, gene expression, cell motility, cell division and cell death. The isoform alpha-1D gives rise to L-type calcium currents. This Rattus norvegicus (Rat) protein is Voltage-dependent L-type calcium channel subunit alpha-1D (Cacna1d).